A 103-amino-acid polypeptide reads, in one-letter code: Histone H4 (103 aa).

The segment covering 1 to 14 (MSGRGKGGKGLGKG) has biased composition (gly residues). Residues 1–20 (MSGRGKGGKGLGKGGAKRHR) are disordered. K6 is subject to N6-acetyl-N6-methyllysine; alternate. K6, K9, and K13 each carry N6-methyllysine; alternate. At K13 the chain carries N6-acetyl-N6-methyllysine; alternate. A DNA-binding region spans residues 17–21 (KRHRK). Position 92 is an N6-glutaryllysine (K92).

This sequence belongs to the histone H4 family. The nucleosome is a histone octamer containing two molecules each of H2A, H2B, H3 and H4 assembled in one H3-H4 heterotetramer and two H2A-H2B heterodimers. The octamer wraps approximately 147 bp of DNA. Post-translationally, glutarylation at Lys-92 (H4K91glu) destabilizes nucleosomes by promoting dissociation of the H2A-H2B dimers from nucleosomes.

Its subcellular location is the nucleus. It localises to the chromosome. Functionally, core component of nucleosome. Nucleosomes wrap and compact DNA into chromatin, limiting DNA accessibility to the cellular machineries which require DNA as a template. Histones thereby play a central role in transcription regulation, DNA repair, DNA replication and chromosomal stability. DNA accessibility is regulated via a complex set of post-translational modifications of histones, also called histone code, and nucleosome remodeling. The polypeptide is Histone H4 (H4.1) (Phanerodontia chrysosporium (White-rot fungus)).